A 252-amino-acid polypeptide reads, in one-letter code: Iron-sulfur cluster co-chaperone protein HscB homolog (252 aa).

The transit peptide at 1 to 59 (MKKTKTMVASISTLIRRTYPSTNQCNSLATIQSQTQLPRESLQHHSSAEGRLRFSGRVF) directs the protein to the mitochondrion. In terms of domain architecture, J spans 93–165 (DYFQIFGLEK…LSRAMYIMKL (73 aa)).

Belongs to the HscB family. In terms of assembly, interacts with ISU1 and HSP70-9/HSCA1.

It is found in the mitochondrion. Its subcellular location is the cytoplasm. The protein resides in the cytosol. In terms of biological role, co-chaperone required for the assembly of iron-sulfur [Fe-S] clusters in both mitochondria and cytosol. Required for the activity of iron-sulfur proteins such as aconitase and succinate dehydrogenase. Involved in iron homeostasis and may take part in the control of iron translocation from roots to shoots. The sequence is that of Iron-sulfur cluster co-chaperone protein HscB homolog from Arabidopsis thaliana (Mouse-ear cress).